The primary structure comprises 374 residues: MPPKQQGPSKKSEQKRKEKVIEDKTFGLKNKKGNKNQKFVAQVENQVRNNNTRMDLVRQQEAAKKKEKDELLDIANLLKPVEQKVAKDVDPKSLLCVFFKQGLCGKGAKCKFSHDLAVAQKTAKKNLYADSREVEKDEETNENWDSDKLNEVVNKKNKNKHMIDIVCKYFLEAVENNKYGWFWECPNGGEKCQYRHCLPEGYVLKKERKAMEQQKEDEISIEELVEKERAALSSKNLTKLTLQTFIAWKKKKLRERKEKEEADLKEKKEKIKSGKHNGMSGRDLFLYDANLVNNDDDEAGDIEMEKEEVDENEKVFEIDANFFKFDGMDDELTDQMSKSSTAVESTAKGMAKMDINEDLFDIDEDVENLDSDED.

Residues 1–20 are disordered; it reads MPPKQQGPSKKSEQKRKEKV. Over residues 10–20 the composition is skewed to basic and acidic residues; that stretch reads KKSEQKRKEKV. 2 consecutive C3H1-type zinc fingers follow at residues 90–117 and 166–199; these read DPKSLLCVFFKQGLCGKGAKCKFSHDLA and VCKYFLEAVENNKYGWFWECPNGGEKCQYRHCLP.

Belongs to the ZC3H15/TMA46 family.

The sequence is that of Zinc finger CCCH domain-containing protein 15 homolog from Caenorhabditis elegans.